Reading from the N-terminus, the 365-residue chain is tRNA 2-selenouridine synthase (365 aa).

Positions 15–138 (FVNDHPIMDA…MRQFLIETID (124 aa)) constitute a Rhodanese domain. The active-site S-selanylcysteine intermediate is C98.

This sequence belongs to the SelU family. As to quaternary structure, monomer.

It catalyses the reaction 5-methylaminomethyl-2-thiouridine(34) in tRNA + selenophosphate + (2E)-geranyl diphosphate + H2O + H(+) = 5-methylaminomethyl-2-selenouridine(34) in tRNA + (2E)-thiogeraniol + phosphate + diphosphate. The enzyme catalyses 5-methylaminomethyl-2-thiouridine(34) in tRNA + (2E)-geranyl diphosphate = 5-methylaminomethyl-S-(2E)-geranyl-thiouridine(34) in tRNA + diphosphate. It carries out the reaction 5-methylaminomethyl-S-(2E)-geranyl-thiouridine(34) in tRNA + selenophosphate + H(+) = 5-methylaminomethyl-2-(Se-phospho)selenouridine(34) in tRNA + (2E)-thiogeraniol. The catalysed reaction is 5-methylaminomethyl-2-(Se-phospho)selenouridine(34) in tRNA + H2O = 5-methylaminomethyl-2-selenouridine(34) in tRNA + phosphate. Its function is as follows. Involved in the post-transcriptional modification of the uridine at the wobble position (U34) of tRNA(Lys), tRNA(Glu) and tRNA(Gln). Catalyzes the conversion of 2-thiouridine (S2U-RNA) to 2-selenouridine (Se2U-RNA). Acts in a two-step process involving geranylation of 2-thiouridine (S2U) to S-geranyl-2-thiouridine (geS2U) and subsequent selenation of the latter derivative to 2-selenouridine (Se2U) in the tRNA chain. This Shewanella halifaxensis (strain HAW-EB4) protein is tRNA 2-selenouridine synthase.